A 433-amino-acid chain; its full sequence is 5-methylthioadenosine/S-adenosylhomocysteine deaminase (433 aa).

Residues histidine 67 and histidine 69 each coordinate Zn(2+). Substrate is bound by residues glutamate 96, arginine 148, arginine 158, and histidine 186. Histidine 213 contributes to the Zn(2+) binding site. Substrate contacts are provided by glutamate 216 and aspartate 301. Aspartate 301 is a binding site for Zn(2+).

It belongs to the metallo-dependent hydrolases superfamily. MTA/SAH deaminase family. It depends on Zn(2+) as a cofactor.

It carries out the reaction S-adenosyl-L-homocysteine + H2O + H(+) = S-inosyl-L-homocysteine + NH4(+). It catalyses the reaction S-methyl-5'-thioadenosine + H2O + H(+) = S-methyl-5'-thioinosine + NH4(+). Functionally, catalyzes the deamination of 5-methylthioadenosine and S-adenosyl-L-homocysteine into 5-methylthioinosine and S-inosyl-L-homocysteine, respectively. Is also able to deaminate adenosine. This chain is 5-methylthioadenosine/S-adenosylhomocysteine deaminase, found in Pelotomaculum thermopropionicum (strain DSM 13744 / JCM 10971 / SI).